The following is a 443-amino-acid chain: Probable glutamate dehydrogenase (443 aa).

K86 is an active-site residue.

The protein belongs to the Glu/Leu/Phe/Val dehydrogenases family.

The catalysed reaction is L-glutamate + NAD(+) + H2O = 2-oxoglutarate + NH4(+) + NADH + H(+). It carries out the reaction L-glutamate + NADP(+) + H2O = 2-oxoglutarate + NH4(+) + NADPH + H(+). The chain is Probable glutamate dehydrogenase from Sinorhizobium fredii (strain NBRC 101917 / NGR234).